We begin with the raw amino-acid sequence, 268 residues long: DNA ligase (268 aa).

Lys-41 acts as the N6-AMP-lysine intermediate in catalysis. ATP is bound by residues Phe-111, Arg-181, and Lys-187.

It belongs to the ATP-dependent DNA ligase family. Requires a divalent metal cation as cofactor.

The enzyme catalyses ATP + (deoxyribonucleotide)n-3'-hydroxyl + 5'-phospho-(deoxyribonucleotide)m = (deoxyribonucleotide)n+m + AMP + diphosphate.. Its function is as follows. Catalyzes efficient strand joining on a single nicked DNA. The chain is DNA ligase (ligA) from Haemophilus influenzae (strain ATCC 51907 / DSM 11121 / KW20 / Rd).